Reading from the N-terminus, the 251-residue chain is 5'-nucleotidase SurE (251 aa).

A divalent metal cation-binding residues include Asp8, Asp9, Ser39, and Asn91.

The protein belongs to the SurE nucleotidase family. A divalent metal cation serves as cofactor.

It localises to the cytoplasm. It catalyses the reaction a ribonucleoside 5'-phosphate + H2O = a ribonucleoside + phosphate. Functionally, nucleotidase that shows phosphatase activity on nucleoside 5'-monophosphates. This Halorhodospira halophila (strain DSM 244 / SL1) (Ectothiorhodospira halophila (strain DSM 244 / SL1)) protein is 5'-nucleotidase SurE.